Reading from the N-terminus, the 400-residue chain is Betaine--homocysteine S-methyltransferase 1 (400 aa).

A Hcy-binding domain is found at 8–309 (RGVLERLNAG…YHIRAVAEEL (302 aa)). Zn(2+)-binding residues include Cys-212, Cys-294, and Cys-295.

As to quaternary structure, homotetramer. Zn(2+) is required as a cofactor.

Its subcellular location is the cytoplasm. The enzyme catalyses L-homocysteine + glycine betaine = N,N-dimethylglycine + L-methionine. It participates in amine and polyamine degradation; betaine degradation; sarcosine from betaine: step 1/2. The protein operates within amino-acid biosynthesis; L-methionine biosynthesis via de novo pathway; L-methionine from L-homocysteine (BhmT route): step 1/1. Functionally, involved in the regulation of homocysteine metabolism. Converts betaine and homocysteine to dimethylglycine and methionine, respectively. This reaction is also required for the irreversible oxidation of choline. In Danio rerio (Zebrafish), this protein is Betaine--homocysteine S-methyltransferase 1 (bhmt).